Consider the following 540-residue polypeptide: Glucose-6-phosphate isomerase (540 aa).

E346 serves as the catalytic Proton donor. Catalysis depends on residues H377 and K505.

It belongs to the GPI family.

The protein resides in the cytoplasm. The catalysed reaction is alpha-D-glucose 6-phosphate = beta-D-fructose 6-phosphate. It functions in the pathway carbohydrate biosynthesis; gluconeogenesis. Its pathway is carbohydrate degradation; glycolysis; D-glyceraldehyde 3-phosphate and glycerone phosphate from D-glucose: step 2/4. Functionally, catalyzes the reversible isomerization of glucose-6-phosphate to fructose-6-phosphate. This chain is Glucose-6-phosphate isomerase, found in Francisella tularensis subsp. holarctica (strain FTNF002-00 / FTA).